The following is a 264-amino-acid chain: Pyridoxine 5'-phosphate synthase (264 aa).

Residue Asn-28 coordinates 3-amino-2-oxopropyl phosphate. A 1-deoxy-D-xylulose 5-phosphate-binding site is contributed by 30 to 31 (DH). Arg-39 contacts 3-amino-2-oxopropyl phosphate. The active-site Proton acceptor is the His-64. Arg-66 and His-71 together coordinate 1-deoxy-D-xylulose 5-phosphate. The active-site Proton acceptor is Glu-91. Thr-121 is a 1-deoxy-D-xylulose 5-phosphate binding site. His-217 serves as the catalytic Proton donor. 3-amino-2-oxopropyl phosphate-binding positions include Gly-218 and 239–240 (GH).

The protein belongs to the PNP synthase family. As to quaternary structure, homooctamer; tetramer of dimers.

It localises to the cytoplasm. The catalysed reaction is 3-amino-2-oxopropyl phosphate + 1-deoxy-D-xylulose 5-phosphate = pyridoxine 5'-phosphate + phosphate + 2 H2O + H(+). It participates in cofactor biosynthesis; pyridoxine 5'-phosphate biosynthesis; pyridoxine 5'-phosphate from D-erythrose 4-phosphate: step 5/5. In terms of biological role, catalyzes the complicated ring closure reaction between the two acyclic compounds 1-deoxy-D-xylulose-5-phosphate (DXP) and 3-amino-2-oxopropyl phosphate (1-amino-acetone-3-phosphate or AAP) to form pyridoxine 5'-phosphate (PNP) and inorganic phosphate. In Psychrobacter arcticus (strain DSM 17307 / VKM B-2377 / 273-4), this protein is Pyridoxine 5'-phosphate synthase.